We begin with the raw amino-acid sequence, 361 residues long: Elongator complex protein 4 (361 aa).

Disordered regions lie at residues 93–124 (QLPGDSDRPNKNENSAGEDNHSSPPSKNPQQE) and 338–361 (DDEQKDTKISNTNPQKQPVKSLDF). Polar residues-rich tracts occupy residues 104 to 121 (NENSAGEDNHSSPPSKNP) and 346 to 355 (ISNTNPQKQP).

This sequence belongs to the ELP4 family. Component of the elongator complex.

It is found in the cytoplasm. The protein localises to the nucleus. It functions in the pathway tRNA modification; 5-methoxycarbonylmethyl-2-thiouridine-tRNA biosynthesis. In terms of biological role, component of the elongator complex, a multiprotein complex which is required for multiple tRNA modifications, including mcm5U (5-methoxycarbonylmethyl uridine), mcm5s2U (5-methoxycarbonylmethyl-2-thiouridine), and ncm5U (5-carbamoylmethyl uridine). The elongator complex catalyzes formation of carboxymethyluridine in the wobble base at position 34 in tRNAs. The sequence is that of Elongator complex protein 4 from Schizosaccharomyces pombe (strain 972 / ATCC 24843) (Fission yeast).